The chain runs to 189 residues: MELGNQPGPGNRPEIELEWYQYLQNTVGVVLSSYGWYILLGCILIYLLIQKLPQNFTRAGTSNHSTVTDPDEIVRRQEAVTAARLRMQEELNAQAELYKQKQVQLQEEKRQRNIETWDRMKEGKSSKVACRLGQEPSPSTSTSAATKPKQEKQERKTLRGSGYNPLTGDGGGTCAWRPGRRGPSSGGUG.

Residues 29–49 (VVLSSYGWYILLGCILIYLLI) traverse the membrane as a helical segment. The span at 114–125 (IETWDRMKEGKS) shows a compositional bias: basic and acidic residues. Residues 114–189 (IETWDRMKEG…RRGPSSGGUG (76 aa)) form a disordered region. Over residues 136–147 (PSPSTSTSAATK) the composition is skewed to low complexity. The segment covering 148-157 (PKQEKQERKT) has biased composition (basic and acidic residues). Sec188 is a non-standard amino acid (selenocysteine).

Belongs to the selenoprotein S family.

The protein resides in the endoplasmic reticulum membrane. The protein localises to the cytoplasm. Functionally, involved in the degradation process of misfolded endoplasmic reticulum (ER) luminal proteins. Participates in the transfer of misfolded proteins from the ER to the cytosol, where they are destroyed by the proteasome in a ubiquitin-dependent manner. This is Selenoprotein S (vimp) from Xenopus tropicalis (Western clawed frog).